We begin with the raw amino-acid sequence, 544 residues long: Probable protein kinase UbiB (544 aa).

A Protein kinase domain is found at 123–501; it reads DFDIEPLASA…KRQQATGKFL (379 aa). ATP is bound by residues 129–137 and Lys152; that span reads LASASIAQV. Catalysis depends on Asp287, which acts as the Proton acceptor. Residues 500-520 form a helical membrane-spanning segment; it reads FLFGVGATLVVCSAILVSSPY.

Belongs to the ABC1 family. UbiB subfamily.

Its subcellular location is the cell inner membrane. Its pathway is cofactor biosynthesis; ubiquinone biosynthesis [regulation]. In terms of biological role, is probably a protein kinase regulator of UbiI activity which is involved in aerobic coenzyme Q (ubiquinone) biosynthesis. The chain is Probable protein kinase UbiB from Vibrio atlanticus (strain LGP32) (Vibrio splendidus (strain Mel32)).